Here is a 210-residue protein sequence, read N- to C-terminus: Thymidylate kinase (210 aa).

Position 10 to 17 (glycine 10 to serine 17) interacts with ATP.

Belongs to the thymidylate kinase family.

The enzyme catalyses dTMP + ATP = dTDP + ADP. Phosphorylation of dTMP to form dTDP in both de novo and salvage pathways of dTTP synthesis. This Haemophilus influenzae (strain ATCC 51907 / DSM 11121 / KW20 / Rd) protein is Thymidylate kinase (tmk).